A 388-amino-acid chain; its full sequence is Phosphoribosylformylglycinamidine cyclo-ligase, chloroplastic/mitochondrial (388 aa).

This sequence belongs to the AIR synthase family.

Its subcellular location is the plastid. The protein resides in the chloroplast. The protein localises to the mitochondrion. It catalyses the reaction 2-formamido-N(1)-(5-O-phospho-beta-D-ribosyl)acetamidine + ATP = 5-amino-1-(5-phospho-beta-D-ribosyl)imidazole + ADP + phosphate + H(+). The protein operates within purine metabolism; IMP biosynthesis via de novo pathway; 5-amino-1-(5-phospho-D-ribosyl)imidazole from N(2)-formyl-N(1)-(5-phospho-D-ribosyl)glycinamide: step 2/2. The sequence is that of Phosphoribosylformylglycinamidine cyclo-ligase, chloroplastic/mitochondrial (PUR5) from Vigna unguiculata (Cowpea).